Reading from the N-terminus, the 689-residue chain is Methionine--tRNA ligase (689 aa).

The 'HIGH' region signature appears at 15–25; sequence PYANGPIHLGH. 4 residues coordinate Zn(2+): cysteine 146, cysteine 149, cysteine 159, and cysteine 162. The 'KMSKS' region signature appears at 332 to 336; that stretch reads KMSKS. Residue lysine 335 participates in ATP binding. Residues 588 to 689 enclose the tRNA-binding domain; it reads DFAKIDLRIA…EGAQPGMRVK (102 aa).

Belongs to the class-I aminoacyl-tRNA synthetase family. MetG type 1 subfamily. In terms of assembly, homodimer. Zn(2+) serves as cofactor.

It localises to the cytoplasm. The enzyme catalyses tRNA(Met) + L-methionine + ATP = L-methionyl-tRNA(Met) + AMP + diphosphate. Functionally, is required not only for elongation of protein synthesis but also for the initiation of all mRNA translation through initiator tRNA(fMet) aminoacylation. The sequence is that of Methionine--tRNA ligase from Shewanella sp. (strain W3-18-1).